The sequence spans 240 residues: Fimbriae Y protein (240 aa).

Its subcellular location is the fimbrium. The polypeptide is Fimbriae Y protein (fimY) (Salmonella typhimurium (strain LT2 / SGSC1412 / ATCC 700720)).